Here is a 678-residue protein sequence, read N- to C-terminus: Methionine--tRNA ligase (678 aa).

The 'HIGH' region motif lies at 14 to 24 (PYANGSIHLGH). Cys-145, Cys-148, Cys-158, and Cys-161 together coordinate Zn(2+). The 'KMSKS' region signature appears at 331 to 335 (KMSKS). Lys-334 contacts ATP. The 103-residue stretch at 576–678 (AFAAVDLRIA…SGAKPGQRVK (103 aa)) folds into the tRNA-binding domain.

Belongs to the class-I aminoacyl-tRNA synthetase family. MetG type 1 subfamily. Homodimer. It depends on Zn(2+) as a cofactor.

The protein localises to the cytoplasm. It catalyses the reaction tRNA(Met) + L-methionine + ATP = L-methionyl-tRNA(Met) + AMP + diphosphate. Is required not only for elongation of protein synthesis but also for the initiation of all mRNA translation through initiator tRNA(fMet) aminoacylation. This chain is Methionine--tRNA ligase, found in Ectopseudomonas mendocina (strain ymp) (Pseudomonas mendocina).